The following is a 314-amino-acid chain: Ribonuclease Z (314 aa).

7 residues coordinate Zn(2+): H62, H64, D66, H67, H139, D210, and H268. The active-site Proton acceptor is D66.

Belongs to the RNase Z family. As to quaternary structure, homodimer. Zn(2+) is required as a cofactor.

It carries out the reaction Endonucleolytic cleavage of RNA, removing extra 3' nucleotides from tRNA precursor, generating 3' termini of tRNAs. A 3'-hydroxy group is left at the tRNA terminus and a 5'-phosphoryl group is left at the trailer molecule.. Its function is as follows. Zinc phosphodiesterase, which displays some tRNA 3'-processing endonuclease activity. Probably involved in tRNA maturation, by removing a 3'-trailer from precursor tRNA. This chain is Ribonuclease Z, found in Rippkaea orientalis (strain PCC 8801 / RF-1) (Cyanothece sp. (strain PCC 8801)).